We begin with the raw amino-acid sequence, 200 residues long: UPF0301 protein BruAb1_0502 (200 aa).

The protein belongs to the UPF0301 (AlgH) family.

In Brucella abortus biovar 1 (strain 9-941), this protein is UPF0301 protein BruAb1_0502.